A 296-amino-acid chain; its full sequence is Probable endonuclease 4 (296 aa).

Zn(2+) contacts are provided by His68, His109, Glu144, Asp178, His181, His213, Asp226, His228, and Glu258.

The protein belongs to the AP endonuclease 2 family. Zn(2+) is required as a cofactor.

It carries out the reaction Endonucleolytic cleavage to 5'-phosphooligonucleotide end-products.. Functionally, endonuclease IV plays a role in DNA repair. It cleaves phosphodiester bonds at apurinic or apyrimidinic (AP) sites, generating a 3'-hydroxyl group and a 5'-terminal sugar phosphate. The sequence is that of Probable endonuclease 4 from Staphylococcus saprophyticus subsp. saprophyticus (strain ATCC 15305 / DSM 20229 / NCIMB 8711 / NCTC 7292 / S-41).